The primary structure comprises 148 residues: 3-dehydroquinate dehydratase (148 aa).

Tyrosine 23 (proton acceptor) is an active-site residue. Substrate is bound by residues asparagine 75, histidine 81, and aspartate 88. Catalysis depends on histidine 101, which acts as the Proton donor. Substrate is bound by residues 102–103 (MS) and arginine 112.

Belongs to the type-II 3-dehydroquinase family. Homododecamer.

The catalysed reaction is 3-dehydroquinate = 3-dehydroshikimate + H2O. The protein operates within metabolic intermediate biosynthesis; chorismate biosynthesis; chorismate from D-erythrose 4-phosphate and phosphoenolpyruvate: step 3/7. Functionally, catalyzes a trans-dehydration via an enolate intermediate. This chain is 3-dehydroquinate dehydratase, found in Syntrophotalea carbinolica (strain DSM 2380 / NBRC 103641 / GraBd1) (Pelobacter carbinolicus).